The primary structure comprises 234 residues: uncharacterized protein (234 aa).

Positions 1 to 23 (MVDQIRSPSWKSGFPSHQHQQGS) are disordered.

This is an uncharacterized protein from Caenorhabditis elegans.